The primary structure comprises 535 residues: ABC1 family protein C10F6.14c (535 aa).

The protein belongs to the protein kinase superfamily. ADCK protein kinase family.

This Schizosaccharomyces pombe (strain 972 / ATCC 24843) (Fission yeast) protein is ABC1 family protein C10F6.14c.